A 123-amino-acid chain; its full sequence is Small ribosomal subunit protein uS12 (123 aa).

The disordered stretch occupies residues 1-32 (MPTINQLVRHGRKRSVKKTNTPALKASPQKRG). D89 carries the 3-methylthioaspartic acid modification.

Belongs to the universal ribosomal protein uS12 family. In terms of assembly, part of the 30S ribosomal subunit. Contacts proteins S8 and S17. May interact with IF1 in the 30S initiation complex.

With S4 and S5 plays an important role in translational accuracy. Functionally, interacts with and stabilizes bases of the 16S rRNA that are involved in tRNA selection in the A site and with the mRNA backbone. Located at the interface of the 30S and 50S subunits, it traverses the body of the 30S subunit contacting proteins on the other side and probably holding the rRNA structure together. The combined cluster of proteins S8, S12 and S17 appears to hold together the shoulder and platform of the 30S subunit. The sequence is that of Small ribosomal subunit protein uS12 from Desulfatibacillum aliphaticivorans.